We begin with the raw amino-acid sequence, 311 residues long: Aspartate carbamoyltransferase catalytic subunit (311 aa).

Residues Arg55 and Thr56 each coordinate carbamoyl phosphate. Residue Lys85 participates in L-aspartate binding. 3 residues coordinate carbamoyl phosphate: Arg106, His135, and Gln138. Positions 168 and 230 each coordinate L-aspartate. Positions 268 and 269 each coordinate carbamoyl phosphate.

The protein belongs to the aspartate/ornithine carbamoyltransferase superfamily. ATCase family. Heterododecamer (2C3:3R2) of six catalytic PyrB chains organized as two trimers (C3), and six regulatory PyrI chains organized as three dimers (R2).

It carries out the reaction carbamoyl phosphate + L-aspartate = N-carbamoyl-L-aspartate + phosphate + H(+). Its pathway is pyrimidine metabolism; UMP biosynthesis via de novo pathway; (S)-dihydroorotate from bicarbonate: step 2/3. Its function is as follows. Catalyzes the condensation of carbamoyl phosphate and aspartate to form carbamoyl aspartate and inorganic phosphate, the committed step in the de novo pyrimidine nucleotide biosynthesis pathway. This is Aspartate carbamoyltransferase catalytic subunit from Baumannia cicadellinicola subsp. Homalodisca coagulata.